The primary structure comprises 400 residues: Nicotinate phosphoribosyltransferase (400 aa).

At His220 the chain carries Phosphohistidine; by autocatalysis.

It belongs to the NAPRTase family. Transiently phosphorylated on a His residue during the reaction cycle. Phosphorylation strongly increases the affinity for substrates and increases the rate of nicotinate D-ribonucleotide production. Dephosphorylation regenerates the low-affinity form of the enzyme, leading to product release.

The catalysed reaction is nicotinate + 5-phospho-alpha-D-ribose 1-diphosphate + ATP + H2O = nicotinate beta-D-ribonucleotide + ADP + phosphate + diphosphate. The protein operates within cofactor biosynthesis; NAD(+) biosynthesis; nicotinate D-ribonucleotide from nicotinate: step 1/1. Its function is as follows. Catalyzes the synthesis of beta-nicotinate D-ribonucleotide from nicotinate and 5-phospho-D-ribose 1-phosphate at the expense of ATP. The sequence is that of Nicotinate phosphoribosyltransferase from Shigella sonnei (strain Ss046).